A 620-amino-acid chain; its full sequence is 1-deoxy-D-xylulose-5-phosphate synthase (620 aa).

Thiamine diphosphate-binding positions include His-80 and 121 to 123; that span reads GHS. Residue Asp-152 participates in Mg(2+) binding. Thiamine diphosphate-binding positions include 153-154, Asn-181, Tyr-288, and Glu-370; that span reads GA. Asn-181 lines the Mg(2+) pocket.

Belongs to the transketolase family. DXPS subfamily. As to quaternary structure, homodimer. The cofactor is Mg(2+). Thiamine diphosphate serves as cofactor.

It carries out the reaction D-glyceraldehyde 3-phosphate + pyruvate + H(+) = 1-deoxy-D-xylulose 5-phosphate + CO2. It participates in metabolic intermediate biosynthesis; 1-deoxy-D-xylulose 5-phosphate biosynthesis; 1-deoxy-D-xylulose 5-phosphate from D-glyceraldehyde 3-phosphate and pyruvate: step 1/1. In terms of biological role, catalyzes the acyloin condensation reaction between C atoms 2 and 3 of pyruvate and glyceraldehyde 3-phosphate to yield 1-deoxy-D-xylulose-5-phosphate (DXP). In Klebsiella pneumoniae subsp. pneumoniae (strain ATCC 700721 / MGH 78578), this protein is 1-deoxy-D-xylulose-5-phosphate synthase.